We begin with the raw amino-acid sequence, 352 residues long: Guanidino acid hydrolase, mitochondrial (352 aa).

A mitochondrion-targeting transit peptide spans 1–35 (MLRLLASGCARGPGPGVGARPAAGLFHPGRRQSRQ). The interval 11–49 (RGPGPGVGARPAAGLFHPGRRQSRQASDAPRNQPPSPEF) is disordered. Mn(2+)-binding residues include His-162, Asp-185, His-187, and Asp-189. Lys-193 bears the N6-acetyllysine mark. Position 217 is an N6-acetyllysine; alternate (Lys-217). Position 217 is an N6-succinyllysine; alternate (Lys-217). Mn(2+) is bound by residues Asp-276 and Asp-278.

Belongs to the ureohydrolase superfamily. Arginase family. Mn(2+) is required as a cofactor. As to expression, highly expressed in liver and kidney. Also found in skeletal muscle, fetal liver, brain, testis, skin and the gastrointestinal tract. Within brain, expression is higher in the cerebral cortex with lower levels in the medulla and spinal cord.

The protein localises to the mitochondrion. The enzyme catalyses 3-guanidinopropanoate + H2O = urea + beta-alanine. It catalyses the reaction 4-guanidinobutanoate + H2O = urea + 4-aminobutanoate. It carries out the reaction taurocyamine + H2O = urea + taurine. The catalysed reaction is L-arginine + H2O = urea + L-ornithine. It participates in nitrogen metabolism; urea cycle; L-ornithine and urea from L-arginine: step 1/1. In terms of biological role, hydrolyzes linear guanidino acids to form urea and the corresponding amines. Displays specificity for substrates having a negatively charged head group and short chains including taurocyamine, guanidino propanoic and butanoic acids. May protect cells by detoxifying potentially harmful amounts of guanidino acids. Metabolizes L-arginine with low efficiency. The chain is Guanidino acid hydrolase, mitochondrial (AGMAT) from Homo sapiens (Human).